The sequence spans 317 residues: Beta-ketoacyl-[acyl-carrier-protein] synthase III (317 aa).

Active-site residues include cysteine 112 and histidine 244. The tract at residues glutamine 245 to arginine 249 is ACP-binding. Residue asparagine 274 is part of the active site.

Belongs to the thiolase-like superfamily. FabH family. Homodimer.

It localises to the cytoplasm. It catalyses the reaction malonyl-[ACP] + acetyl-CoA + H(+) = 3-oxobutanoyl-[ACP] + CO2 + CoA. It functions in the pathway lipid metabolism; fatty acid biosynthesis. Catalyzes the condensation reaction of fatty acid synthesis by the addition to an acyl acceptor of two carbons from malonyl-ACP. Catalyzes the first condensation reaction which initiates fatty acid synthesis and may therefore play a role in governing the total rate of fatty acid production. Possesses both acetoacetyl-ACP synthase and acetyl transacylase activities. Its substrate specificity determines the biosynthesis of branched-chain and/or straight-chain of fatty acids. This chain is Beta-ketoacyl-[acyl-carrier-protein] synthase III, found in Enterobacter sp. (strain 638).